We begin with the raw amino-acid sequence, 314 residues long: tRNA dimethylallyltransferase (314 aa).

Gly-12–Thr-19 provides a ligand contact to ATP. Thr-14–Thr-19 provides a ligand contact to substrate. 2 interaction with substrate tRNA regions span residues Asp-37 to Leu-40 and Gln-162 to Arg-166.

It belongs to the IPP transferase family. As to quaternary structure, monomer. It depends on Mg(2+) as a cofactor.

The catalysed reaction is adenosine(37) in tRNA + dimethylallyl diphosphate = N(6)-dimethylallyladenosine(37) in tRNA + diphosphate. In terms of biological role, catalyzes the transfer of a dimethylallyl group onto the adenine at position 37 in tRNAs that read codons beginning with uridine, leading to the formation of N6-(dimethylallyl)adenosine (i(6)A). The polypeptide is tRNA dimethylallyltransferase (Acinetobacter baumannii (strain AB0057)).